The sequence spans 91 residues: MTEQKNKASLIEFPCAFPLKVMGAVHPEFEQAVLDTVRLHAPDTQAHHITTRPSSKGNYTGATVQVKVENQEQLDNIYRALTSHELVKVVL.

This sequence belongs to the UPF0250 family.

The chain is UPF0250 protein NGK_1021 from Neisseria gonorrhoeae (strain NCCP11945).